A 76-amino-acid polypeptide reads, in one-letter code: Small ribosomal subunit protein bS18 (76 aa).

It belongs to the bacterial ribosomal protein bS18 family. As to quaternary structure, part of the 30S ribosomal subunit. Forms a tight heterodimer with protein bS6.

Binds as a heterodimer with protein bS6 to the central domain of the 16S rRNA, where it helps stabilize the platform of the 30S subunit. The chain is Small ribosomal subunit protein bS18 from Nitrosomonas europaea (strain ATCC 19718 / CIP 103999 / KCTC 2705 / NBRC 14298).